A 148-amino-acid polypeptide reads, in one-letter code: 3-hydroxyacyl-[acyl-carrier-protein] dehydratase FabZ (148 aa).

His-48 is a catalytic residue.

Belongs to the thioester dehydratase family. FabZ subfamily.

The protein resides in the cytoplasm. The catalysed reaction is a (3R)-hydroxyacyl-[ACP] = a (2E)-enoyl-[ACP] + H2O. Involved in unsaturated fatty acids biosynthesis. Catalyzes the dehydration of short chain beta-hydroxyacyl-ACPs and long chain saturated and unsaturated beta-hydroxyacyl-ACPs. The sequence is that of 3-hydroxyacyl-[acyl-carrier-protein] dehydratase FabZ from Nitratiruptor sp. (strain SB155-2).